A 2150-amino-acid polypeptide reads, in one-letter code: A disintegrin and metalloproteinase with thrombospondin motifs gon-1 (2150 aa).

Positions 1 to 28 are cleaved as a signal peptide; sequence MRSIGGSFHLLQPVVAALILLVVCLVYA. Positions 29-273 are excised as a propeptide; that stretch reads LQSGSGTISE…VIERKARSRR (245 aa). 4 N-linked (GlcNAc...) asparagine glycosylation sites follow: asparagine 134, asparagine 213, asparagine 243, and asparagine 248. The 214-residue stretch at 280–493 folds into the Peptidase M12B domain; the sequence is HYVEVLVVAD…GQTQCLFDQP (214 aa). Disulfide bonds link cysteine 402-cysteine 488 and cysteine 440-cysteine 470. Residue histidine 424 coordinates Zn(2+). The active site involves glutamate 425. Residues histidine 428 and histidine 434 each contribute to the Zn(2+) site. The 85-residue stretch at 503–587 folds into the Disintegrin domain; that stretch reads FVRDEPGKKY…RLAPESLTKI (85 aa). The region spanning 588–643 is the TSP type-1 1 domain; it reads DGQWGDWRSWGECSRTCGGGVQKGLRDCDSPKPRNGGKYCVGQRERYRSCNTQECP. Disulfide bonds link cysteine 600–cysteine 637, cysteine 604–cysteine 642, and cysteine 615–cysteine 627. N-linked (GlcNAc...) asparagine glycosylation is present at asparagine 842. 11 TSP type-1 domains span residues 943–1003, 1004–1057, 1060–1115, 1116–1165, 1168–1227, 1228–1277, 1280–1339, 1352–1409, 1410–1469, 1474–1524, and 1527–1585; these read CSTR…IDCS, GRKW…RECN, PCPR…HACT, WWQF…KPCH, SCPK…GTCP, FWRN…QTCH, PCTS…DTCD, PPIR…RDCS, YWKM…EPCP, HIGS…ELCP, and TNNS…PPCR. Asparagine 1139 and asparagine 1199 each carry an N-linked (GlcNAc...) asparagine glycan. N-linked (GlcNAc...) asparagine glycosylation is found at asparagine 1370 and asparagine 1432. N-linked (GlcNAc...) asparagine glycans are attached at residues asparagine 1528, asparagine 1590, asparagine 1606, and asparagine 1654. Residues 1590-1614 are disordered; the sequence is NKTSSASMTSLSSSNSNTTSSASAS. Positions 1592-1614 are enriched in low complexity; the sequence is TSSASMTSLSSSNSNTTSSASAS. TSP type-1 domains are found at residues 1621-1675, 1678-1736, 1737-1793, 1794-1866, and 1867-1924; these read PVVS…VRCR, HCPR…VACP, AYRW…DTSN, CPYE…NPCD, and SEFK…RNCL. 6 disulfide bridges follow: cysteine 1679–cysteine 1718, cysteine 1690–cysteine 1694, cysteine 1690–cysteine 1730, cysteine 1694–cysteine 1735, cysteine 1705–cysteine 1718, and cysteine 1730–cysteine 1735. Residues asparagine 1828 and asparagine 1855 are each glycosylated (N-linked (GlcNAc...) asparagine). The GON domain occupies 1924 to 2123; the sequence is LPSTCQELKS…RYKGLIFEVN (200 aa). 3 N-linked (GlcNAc...) asparagine glycosylation sites follow: asparagine 1942, asparagine 1960, and asparagine 1997.

Zn(2+) serves as cofactor. As to expression, expressed by the gonadal distal tip cells (DTCs). Expressed in muscles, including body wall, vulval and anal depressor muscles. Expressed in motor neurons and in ASI and ASJ neurons.

It is found in the secreted. The protein resides in the extracellular space. The protein localises to the extracellular matrix. Its subcellular location is the basement membrane. It localises to the endoplasmic reticulum. It is found in the golgi apparatus. Secreted metalloprotease required for distal tip cell (DTC) migration along the body wall basement membranes, a key step that promotes gonad morphogenesis. Probably acts by remodeling the basement membrane during cell migration. Required to restrict presynaptic growth at the neuromuscular junctions (NMJ) in late larval stage and in adult motor neurons, probably by controlling collagen IV emb-9 degradation, a component of the synapse basement membrane. Also involved in the organization of adult muscle morphology. Has a protease-independent function in promoting the transport from the endoplasmic reticulum to the Golgi apparatus of a variety of secretory cargos. Required for the secretion of insulin-like peptide ins-7, daf-28 and ins-18 and TGF beta-like protein daf-7. In peripheral tissues, negatively regulates insulin-mediated daf-16 translocation and thereby negatively regulates lifespan and dauer formation. This Caenorhabditis elegans protein is A disintegrin and metalloproteinase with thrombospondin motifs gon-1.